The sequence spans 350 residues: MSDTSSPKPVASGEKFRTAQGITAIKDGQKRRASAEPQVFEPKPKWLRVKAPGGSRFEAVKRNVGEHRLSTVCQESHCPNMGECWSNGTATIMLMGSVCTRACRFCAVDTGNPNGWLDLEEPQNTAKSVELMALRYIVLTSVDRDDLEDGGASHYAACVRAIKENTPQVVVEALTPDFDGDHQAIERVVDSGLEVFAQNVETVKRLTHVVRDPRAGYEKTLKVLEHAKKHRPQVLTKTSLMLGLGETDEEILETMDDLRAIGVDILTLGQYLQPTRNHLKVQRWVSPEEFNRLRDIGLEKGFMEVAAGPLVRSSYRADRVFEKNNLGLAAPLPVPGQEVDASLIPALNLN.

The interval 1–39 (MSDTSSPKPVASGEKFRTAQGITAIKDGQKRRASAEPQV) is disordered. Residues cysteine 73, cysteine 78, cysteine 84, cysteine 99, cysteine 103, cysteine 106, and serine 314 each contribute to the [4Fe-4S] cluster site. Residues 85–303 (WSNGTATIML…RDIGLEKGFM (219 aa)) form the Radical SAM core domain.

Belongs to the radical SAM superfamily. Lipoyl synthase family. The cofactor is [4Fe-4S] cluster.

Its subcellular location is the cytoplasm. The enzyme catalyses [[Fe-S] cluster scaffold protein carrying a second [4Fe-4S](2+) cluster] + N(6)-octanoyl-L-lysyl-[protein] + 2 oxidized [2Fe-2S]-[ferredoxin] + 2 S-adenosyl-L-methionine + 4 H(+) = [[Fe-S] cluster scaffold protein] + N(6)-[(R)-dihydrolipoyl]-L-lysyl-[protein] + 4 Fe(3+) + 2 hydrogen sulfide + 2 5'-deoxyadenosine + 2 L-methionine + 2 reduced [2Fe-2S]-[ferredoxin]. It participates in protein modification; protein lipoylation via endogenous pathway; protein N(6)-(lipoyl)lysine from octanoyl-[acyl-carrier-protein]: step 2/2. Catalyzes the radical-mediated insertion of two sulfur atoms into the C-6 and C-8 positions of the octanoyl moiety bound to the lipoyl domains of lipoate-dependent enzymes, thereby converting the octanoylated domains into lipoylated derivatives. The sequence is that of Lipoyl synthase from Ectopseudomonas mendocina (strain ymp) (Pseudomonas mendocina).